A 345-amino-acid chain; its full sequence is Achaete-scute complex protein T4 (345 aa).

Over residues 78-92 (SESVSSLSPGSSPAP) the composition is skewed to low complexity. Positions 78 to 109 (SESVSSLSPGSSPAPYNVDQSQSVQRRNARER) are disordered. Residues 99–162 (QSVQRRNARE…RIAVEYIRRL (64 aa)) enclose the bHLH domain.

As to quaternary structure, efficient DNA binding requires dimerization with another bHLH protein. Interacts with da (via bHLH motif). Interacts with Bap60. In terms of tissue distribution, l(1)SC, SC and AC strongly label the presumptive stomatogastric nervous system, while ASE is more prominent in the presumptive procephalic lobe. Associates with the somatic nuclei through nuclear cycles 9 and 10. During nuclear cycle 11 distributes uniformly in the embryo.

AS-C proteins are involved in the determination of the neuronal precursors in the peripheral nervous system and the central nervous system. Also involved in sex determination and dosage compensation. This chain is Achaete-scute complex protein T4 (sc), found in Drosophila melanogaster (Fruit fly).